The following is an 89-amino-acid chain: Putative regulatory protein CLL_A1210 (89 aa).

It belongs to the RemA family.

The polypeptide is Putative regulatory protein CLL_A1210 (Clostridium botulinum (strain Eklund 17B / Type B)).